Reading from the N-terminus, the 312-residue chain is Protoheme IX farnesyltransferase (312 aa).

9 helical membrane-spanning segments follow: residues 29 to 49 (VMSL…GHMN), 50 to 70 (PVLA…SGAL), 90 to 110 (IPAG…LSAF), 117 to 137 (LMVN…YAVV), 150 to 170 (IVIG…AATG), 177 to 197 (VVLF…LSLF), 223 to 243 (ALFY…LGFA), 248 to 268 (GAIS…MWVA), and 292 to 312 (LFAV…FGGF).

Belongs to the UbiA prenyltransferase family. Protoheme IX farnesyltransferase subfamily.

It localises to the cell inner membrane. The enzyme catalyses heme b + (2E,6E)-farnesyl diphosphate + H2O = Fe(II)-heme o + diphosphate. It functions in the pathway porphyrin-containing compound metabolism; heme O biosynthesis; heme O from protoheme: step 1/1. In terms of biological role, converts heme B (protoheme IX) to heme O by substitution of the vinyl group on carbon 2 of heme B porphyrin ring with a hydroxyethyl farnesyl side group. This chain is Protoheme IX farnesyltransferase, found in Brucella anthropi (strain ATCC 49188 / DSM 6882 / CCUG 24695 / JCM 21032 / LMG 3331 / NBRC 15819 / NCTC 12168 / Alc 37) (Ochrobactrum anthropi).